The following is a 25-amino-acid chain: Endoglucanase 1 (25 aa).

The interval 1–25 is disordered; the sequence is YDASLKPNLQIPQKNIPNNDAVNIK. Polar residues predominate over residues 10–25; that stretch reads QIPQKNIPNNDAVNIK.

The enzyme catalyses Endohydrolysis of (1-&gt;4)-beta-D-glucosidic linkages in cellulose, lichenin and cereal beta-D-glucans.. This enzyme hydrolyzes cellotetraose, cellopentaose, and cellohexaose to cellobiose and cellotriose but does not hydrolyze cellobiose or cellotriose. This chain is Endoglucanase 1, found in Ruminiclostridium josui (Clostridium josui).